The following is a 192-amino-acid chain: 3-isopropylmalate dehydratase small subunit (192 aa).

Belongs to the LeuD family. LeuD type 1 subfamily. As to quaternary structure, heterodimer of LeuC and LeuD.

The enzyme catalyses (2R,3S)-3-isopropylmalate = (2S)-2-isopropylmalate. It functions in the pathway amino-acid biosynthesis; L-leucine biosynthesis; L-leucine from 3-methyl-2-oxobutanoate: step 2/4. Its function is as follows. Catalyzes the isomerization between 2-isopropylmalate and 3-isopropylmalate, via the formation of 2-isopropylmaleate. The sequence is that of 3-isopropylmalate dehydratase small subunit from Zymomonas mobilis subsp. mobilis (strain ATCC 31821 / ZM4 / CP4).